A 281-amino-acid chain; its full sequence is Nucleotide-binding protein PSHAa2554 (281 aa).

Position 8–15 (8–15) interacts with ATP; it reads GRSGSGKS. 56 to 59 serves as a coordination point for GTP; sequence DVRN.

This sequence belongs to the RapZ-like family.

Its function is as follows. Displays ATPase and GTPase activities. The sequence is that of Nucleotide-binding protein PSHAa2554 from Pseudoalteromonas translucida (strain TAC 125).